A 476-amino-acid chain; its full sequence is Ribulose bisphosphate carboxylase large chain (476 aa).

Substrate is bound by residues Asn-124 and Thr-174. The active-site Proton acceptor is Lys-176. Residue Lys-178 coordinates substrate. Mg(2+)-binding residues include Lys-202, Asp-204, and Glu-205. Residue Lys-202 is modified to N6-carboxylysine. Residue His-295 is the Proton acceptor of the active site. Positions 296, 328, and 380 each coordinate substrate.

It belongs to the RuBisCO large chain family. Type I subfamily. Heterohexadecamer of 8 large chains and 8 small chains; disulfide-linked. The disulfide link is formed within the large subunit homodimers. Requires Mg(2+) as cofactor. The disulfide bond which can form in the large chain dimeric partners within the hexadecamer appears to be associated with oxidative stress and protein turnover.

The protein resides in the carboxysome. The enzyme catalyses 2 (2R)-3-phosphoglycerate + 2 H(+) = D-ribulose 1,5-bisphosphate + CO2 + H2O. It carries out the reaction D-ribulose 1,5-bisphosphate + O2 = 2-phosphoglycolate + (2R)-3-phosphoglycerate + 2 H(+). Functionally, ruBisCO catalyzes two reactions: the carboxylation of D-ribulose 1,5-bisphosphate, the primary event in carbon dioxide fixation, as well as the oxidative fragmentation of the pentose substrate in the photorespiration process. Both reactions occur simultaneously and in competition at the same active site. This Cyanothece sp. (strain PCC 7425 / ATCC 29141) protein is Ribulose bisphosphate carboxylase large chain.